Here is a 365-residue protein sequence, read N- to C-terminus: uncharacterized protein (365 aa).

29-36 provides a ligand contact to ATP; that stretch reads GPLNSGKS.

Belongs to the archaeal ATPase family.

This is an uncharacterized protein from Methanocaldococcus jannaschii (strain ATCC 43067 / DSM 2661 / JAL-1 / JCM 10045 / NBRC 100440) (Methanococcus jannaschii).